The following is an 805-amino-acid chain: Kinesin-like protein KIP3 (805 aa).

The Kinesin motor domain occupies 10–438; it reads SIVVAIRVRP…LKYANRAKEI (429 aa). ATP is bound at residue 192–199; sequence GATGCGKT. The stretch at 449-481 forms a coiled coil; the sequence is LSRHVGSYLKMITEQKRQIEELREREEKMISLK. Residues 720 to 805 form a disordered region; it reads NFSQKKVKWT…HQSLLATARK (86 aa). The segment covering 764–773 has biased composition (polar residues); the sequence is MQDTTFNEQG. Low complexity predominate over residues 774-783; the sequence is PSTPSAPTTA. Over residues 792–805 the composition is skewed to polar residues; the sequence is SLLTHQSLLATARK.

This sequence belongs to the TRAFAC class myosin-kinesin ATPase superfamily. Kinesin family. Kinesin II subfamily.

It localises to the cytoplasm. The protein resides in the cytoskeleton. This chain is Kinesin-like protein KIP3 (KIP3), found in Saccharomyces cerevisiae (strain ATCC 204508 / S288c) (Baker's yeast).